The chain runs to 338 residues: D-erythrose-4-phosphate dehydrogenase (338 aa).

11–12 (RI) lines the NAD(+) pocket. Residues 153-155 (SCT), Arg-199, 212-213 (TK), and Arg-235 each bind substrate. Cys-154 acts as the Nucleophile in catalysis. Asn-317 contacts NAD(+).

Belongs to the glyceraldehyde-3-phosphate dehydrogenase family. Epd subfamily. As to quaternary structure, homotetramer.

The protein localises to the cytoplasm. The catalysed reaction is D-erythrose 4-phosphate + NAD(+) + H2O = 4-phospho-D-erythronate + NADH + 2 H(+). It participates in cofactor biosynthesis; pyridoxine 5'-phosphate biosynthesis; pyridoxine 5'-phosphate from D-erythrose 4-phosphate: step 1/5. Its function is as follows. Catalyzes the NAD-dependent conversion of D-erythrose 4-phosphate to 4-phosphoerythronate. This Shewanella baltica (strain OS223) protein is D-erythrose-4-phosphate dehydrogenase.